A 363-amino-acid chain; its full sequence is Chorismate synthase (363 aa).

Positions 48 and 54 each coordinate NADP(+). FMN-binding positions include 125 to 127 (RSS), 237 to 238 (NA), Gly-277, 292 to 296 (KPTSS), and Arg-318.

The protein belongs to the chorismate synthase family. In terms of assembly, homotetramer. The cofactor is FMNH2.

The catalysed reaction is 5-O-(1-carboxyvinyl)-3-phosphoshikimate = chorismate + phosphate. It participates in metabolic intermediate biosynthesis; chorismate biosynthesis; chorismate from D-erythrose 4-phosphate and phosphoenolpyruvate: step 7/7. Catalyzes the anti-1,4-elimination of the C-3 phosphate and the C-6 proR hydrogen from 5-enolpyruvylshikimate-3-phosphate (EPSP) to yield chorismate, which is the branch point compound that serves as the starting substrate for the three terminal pathways of aromatic amino acid biosynthesis. This reaction introduces a second double bond into the aromatic ring system. The chain is Chorismate synthase from Ectopseudomonas mendocina (strain ymp) (Pseudomonas mendocina).